A 610-amino-acid polypeptide reads, in one-letter code: DNA mismatch repair protein MutL (610 aa).

It belongs to the DNA mismatch repair MutL/HexB family.

This protein is involved in the repair of mismatches in DNA. It is required for dam-dependent methyl-directed DNA mismatch repair. May act as a 'molecular matchmaker', a protein that promotes the formation of a stable complex between two or more DNA-binding proteins in an ATP-dependent manner without itself being part of a final effector complex. This chain is DNA mismatch repair protein MutL, found in Rickettsia canadensis (strain McKiel).